We begin with the raw amino-acid sequence, 232 residues long: Small ribosomal subunit protein uS2 (232 aa).

Belongs to the universal ribosomal protein uS2 family.

The polypeptide is Small ribosomal subunit protein uS2 (Syntrophomonas wolfei subsp. wolfei (strain DSM 2245B / Goettingen)).